Here is an 89-residue protein sequence, read N- to C-terminus: UPF0473 protein Helmi_02360 (89 aa).

It belongs to the UPF0473 family.

The protein is UPF0473 protein Helmi_02360 of Heliobacterium modesticaldum (strain ATCC 51547 / Ice1).